We begin with the raw amino-acid sequence, 82 residues long: UPF0298 protein SMU_1670c (82 aa).

The protein belongs to the UPF0298 family.

It localises to the cytoplasm. The chain is UPF0298 protein SMU_1670c from Streptococcus mutans serotype c (strain ATCC 700610 / UA159).